The primary structure comprises 309 residues: Aspartate carbamoyltransferase catalytic subunit (309 aa).

Residues Arg-58 and Thr-59 each coordinate carbamoyl phosphate. Lys-87 serves as a coordination point for L-aspartate. 3 residues coordinate carbamoyl phosphate: Arg-108, His-136, and Gln-139. The L-aspartate site is built by Arg-168 and Arg-229. Carbamoyl phosphate-binding residues include Leu-268 and Pro-269.

This sequence belongs to the aspartate/ornithine carbamoyltransferase superfamily. ATCase family. Heterooligomer of catalytic and regulatory chains.

The catalysed reaction is carbamoyl phosphate + L-aspartate = N-carbamoyl-L-aspartate + phosphate + H(+). It participates in pyrimidine metabolism; UMP biosynthesis via de novo pathway; (S)-dihydroorotate from bicarbonate: step 2/3. Functionally, catalyzes the condensation of carbamoyl phosphate and aspartate to form carbamoyl aspartate and inorganic phosphate, the committed step in the de novo pyrimidine nucleotide biosynthesis pathway. This Methanosarcina mazei (strain ATCC BAA-159 / DSM 3647 / Goe1 / Go1 / JCM 11833 / OCM 88) (Methanosarcina frisia) protein is Aspartate carbamoyltransferase catalytic subunit.